We begin with the raw amino-acid sequence, 133 residues long: uncharacterized protein (133 aa).

This is an uncharacterized protein from Rickettsia conorii (strain ATCC VR-613 / Malish 7).